A 150-amino-acid polypeptide reads, in one-letter code: D-aminoacyl-tRNA deacylase (150 aa).

A Gly-cisPro motif, important for rejection of L-amino acids motif is present at residues 136–137 (GP).

Belongs to the DTD family. In terms of assembly, homodimer.

The protein localises to the cytoplasm. The enzyme catalyses glycyl-tRNA(Ala) + H2O = tRNA(Ala) + glycine + H(+). It carries out the reaction a D-aminoacyl-tRNA + H2O = a tRNA + a D-alpha-amino acid + H(+). Functionally, an aminoacyl-tRNA editing enzyme that deacylates mischarged D-aminoacyl-tRNAs. Also deacylates mischarged glycyl-tRNA(Ala), protecting cells against glycine mischarging by AlaRS. Acts via tRNA-based rather than protein-based catalysis; rejects L-amino acids rather than detecting D-amino acids in the active site. By recycling D-aminoacyl-tRNA to D-amino acids and free tRNA molecules, this enzyme counteracts the toxicity associated with the formation of D-aminoacyl-tRNA entities in vivo and helps enforce protein L-homochirality. This is D-aminoacyl-tRNA deacylase from Staphylococcus carnosus (strain TM300).